The primary structure comprises 453 residues: Aryl hydrocarbon receptor nuclear translocator homolog (453 aa).

The bHLH domain maps to 44–97 (FARENHSEIERRRRNKMTHYINELAEMVPQCASLGRKPDKLTILRMAVSHMKGI). PAS domains follow at residues 115 to 193 (DQEL…LDLK) and 277 to 347 (ASMP…LSDQ). The region spanning 348–392 (PMRINIRVRTSTDYIPCTVSAYKFMNPYSEQFEYVVATHQIAPQE) is the PAC domain. The segment at 410–453 (EFGELGGAPSAVDYGQSSSGGWRPEAQGAPQAQWQWDPMNGYNQ) is disordered.

Interacts with hif-1. Heterodimer; efficient DNA binding requires dimerization with another bHLH protein. Forms a heterodimer with ahr-1; binds DNA as heterodimer. Forms a heterodimer with PAS domain-containing protein cky-1; binds DNA as heterodimer. As to expression, expressed in many cell types throughout development, including hypodermal cells, intestinal cells, pharyngeal cells, and neurons. Expressed in every cell during embryo.

It localises to the nucleus. Functionally, transcription factor. Efficient DNA binding requires dimerization with another bHLH protein, such as cky-1 or ahr-1. Regulates transcription of target genes, probably acting in complex with cky-1. Has a role in cellular differentiation. Required for pharyngeal development. In collaboration with ahr-1 it is involved in RMEL/R and SDQR neuron cell migration. Acts in the cellular response to hypoxia. Involved in aggregation behavior by regulating soluble guanylate cyclase gene expression in the URX neurons. The sequence is that of Aryl hydrocarbon receptor nuclear translocator homolog from Caenorhabditis elegans.